A 238-amino-acid chain; its full sequence is Probable septum site-determining protein MinC (238 aa).

The protein belongs to the MinC family. Interacts with MinD and FtsZ.

Its function is as follows. Cell division inhibitor that blocks the formation of polar Z ring septums. Rapidly oscillates between the poles of the cell to destabilize FtsZ filaments that have formed before they mature into polar Z rings. Prevents FtsZ polymerization. The chain is Probable septum site-determining protein MinC from Xylella fastidiosa (strain M23).